The primary structure comprises 506 residues: Aspartic proteinase A1 (506 aa).

Residues 1–24 (MKIYSRTVAVSLIVSFLLCFSAFA) form the signal peptide. The propeptide at 25–64 (ERNDGTFRVGLKKLKLDSKNRLAARVESKQEKPLRAYRLG) is activation peptide. The Peptidase A1 domain occupies 82–503 (YYGEIAIGTP…DFGNEQVGFA (422 aa)). Residue D100 is part of the active site. 2 disulfide bridges follow: C113/C119 and C278/C282. Residue D287 is part of the active site. The Saposin B-type domain maps to 312 to 417 (VVSQQCKTVV…NELCERLPSP (106 aa)). 4 cysteine pairs are disulfide-bonded: C317-C411, C342-C383, C348-C380, and C425-C462. A glycan (N-linked (GlcNAc...) asparagine) is linked at N397.

It belongs to the peptidase A1 family. Expressed in roots, leaves, stems, petals, carpels, seed pods and dry seeds.

It localises to the vacuole. In terms of biological role, involved in the breakdown of propeptides of storage proteins in protein-storage vacuoles. Possesses aspartic protease activity in vitro. The polypeptide is Aspartic proteinase A1 (APA1) (Arabidopsis thaliana (Mouse-ear cress)).